A 138-amino-acid polypeptide reads, in one-letter code: Large ribosomal subunit protein bL19 (138 aa).

Belongs to the bacterial ribosomal protein bL19 family.

Its function is as follows. This protein is located at the 30S-50S ribosomal subunit interface and may play a role in the structure and function of the aminoacyl-tRNA binding site. The sequence is that of Large ribosomal subunit protein bL19 from Rickettsia canadensis (strain McKiel).